We begin with the raw amino-acid sequence, 212 residues long: Uridine kinase (212 aa).

Gly-13–Ser-20 serves as a coordination point for ATP.

Belongs to the uridine kinase family.

The protein resides in the cytoplasm. The catalysed reaction is uridine + ATP = UMP + ADP + H(+). It carries out the reaction cytidine + ATP = CMP + ADP + H(+). It functions in the pathway pyrimidine metabolism; CTP biosynthesis via salvage pathway; CTP from cytidine: step 1/3. Its pathway is pyrimidine metabolism; UMP biosynthesis via salvage pathway; UMP from uridine: step 1/1. The polypeptide is Uridine kinase (Shewanella baltica (strain OS155 / ATCC BAA-1091)).